Consider the following 459-residue polypeptide: Putrescine aminotransferase (459 aa).

Pyridoxal 5'-phosphate-binding positions include Gly150–Thr151 and Gln274. An N6-(pyridoxal phosphate)lysine modification is found at Lys300. Residue Thr332 coordinates pyridoxal 5'-phosphate.

The protein belongs to the class-III pyridoxal-phosphate-dependent aminotransferase family. Putrescine aminotransferase subfamily. It depends on pyridoxal 5'-phosphate as a cofactor.

It carries out the reaction an alkane-alpha,omega-diamine + 2-oxoglutarate = an omega-aminoaldehyde + L-glutamate. The catalysed reaction is putrescine + 2-oxoglutarate = 1-pyrroline + L-glutamate + H2O. It catalyses the reaction cadaverine + 2-oxoglutarate = 5-aminopentanal + L-glutamate. It functions in the pathway amine and polyamine degradation; putrescine degradation; 4-aminobutanal from putrescine (transaminase route): step 1/1. Its function is as follows. Catalyzes the aminotransferase reaction from putrescine to 2-oxoglutarate, leading to glutamate and 4-aminobutanal, which spontaneously cyclizes to form 1-pyrroline. This is the first step in one of two pathways for putrescine degradation, where putrescine is converted into 4-aminobutanoate (gamma-aminobutyrate or GABA) via 4-aminobutanal. Also functions as a cadaverine transaminase in a a L-lysine degradation pathway to succinate that proceeds via cadaverine, glutarate and L-2-hydroxyglutarate. This Enterobacter sp. (strain 638) protein is Putrescine aminotransferase.